The chain runs to 148 residues: Small ribosomal subunit protein uS9 (148 aa).

This sequence belongs to the universal ribosomal protein uS9 family.

The chain is Small ribosomal subunit protein uS9 (RpS16) from Aedes aegypti (Yellowfever mosquito).